We begin with the raw amino-acid sequence, 167 residues long: NADH-quinone oxidoreductase subunit B (167 aa).

Cysteine 48, cysteine 49, cysteine 113, and cysteine 143 together coordinate [4Fe-4S] cluster.

The protein belongs to the complex I 20 kDa subunit family. In terms of assembly, NDH-1 is composed of 14 different subunits. Subunits NuoB, C, D, E, F, and G constitute the peripheral sector of the complex. [4Fe-4S] cluster serves as cofactor.

The protein resides in the cell membrane. The catalysed reaction is a quinone + NADH + 5 H(+)(in) = a quinol + NAD(+) + 4 H(+)(out). Functionally, NDH-1 shuttles electrons from NADH, via FMN and iron-sulfur (Fe-S) centers, to quinones in the respiratory chain. Couples the redox reaction to proton translocation (for every two electrons transferred, four hydrogen ions are translocated across the cytoplasmic membrane), and thus conserves the redox energy in a proton gradient. This is NADH-quinone oxidoreductase subunit B from Wolbachia pipientis subsp. Culex pipiens (strain wPip).